We begin with the raw amino-acid sequence, 529 residues long: Amino acid transporter heavy chain SLC3A2 (529 aa).

A disordered region spans residues 1-20 (MSQDTEVDMKEVELNELEPE). The Cytoplasmic portion of the chain corresponds to 1 to 84 (MSQDTEVDMK…SPGWVRTRWA (84 aa)). Position 2 is a phosphoserine (S2). T5 bears the Phosphothreonine mark. A compositionally biased stretch (basic and acidic residues) spans 7 to 20 (VDMKEVELNELEPE). K49 is covalently cross-linked (Glycyl lysine isopeptide (Lys-Gly) (interchain with G-Cter in ubiquitin)). S65 bears the Phosphoserine mark. A Glycyl lysine isopeptide (Lys-Gly) (interchain with G-Cter in SUMO2) cross-link involves residue K66. The chain crosses the membrane as a helical; Signal-anchor for type II membrane protein span at residues 85-105 (LLLLFWLGWIGMLAGAVVIIV). Over 106-529 (RAPRCRELPV…GLLLHFPYVA (424 aa)) the chain is Extracellular. An N-linked (GlcNAc...) asparagine glycan is attached at N266. 2 positions are modified to phosphoserine: S307 and S309. Residues N325 and N405 are each glycosylated (N-linked (GlcNAc...) asparagine). Residue S426 is modified to Phosphoserine.

Belongs to the SLC3A transporter family. In terms of assembly, disulfide-linked heterodimer with a non-glycosylated light chain (SLC7A5, SLC7A6, SLC7A7, SLC7A8, SLC7A10 or SLC7A11). Interacts with TLCD3A/CT120 and ICAM1. Constitutively and specifically associates with beta-1 integrins (alpha-2/beta-1, alpha-3/beta-1, alpha-5/beta-1 and alpha-6/beta-1), but minimally with alpha-4/beta-1. Interacts with LAPTM4B; recruits SLC3A2 and SLC7A5 to lysosomes to promote leucine uptake into these organelles and is required for mTORC1 activation. In terms of processing, phosphorylation on Ser-307 or Ser-309 and on Ser-426 by ecto-protein kinases favors heterotypic cell-cell interactions. Post-translationally, N-glycosylated; N-glycosylation is crucial for trafficking and stability of SLC3A2 to the plasma membrane.

It localises to the apical cell membrane. The protein resides in the cell membrane. The protein localises to the cell junction. It is found in the lysosome membrane. Its subcellular location is the melanosome. It localises to the basolateral cell membrane. Its function is as follows. Acts as a chaperone that facilitates biogenesis and trafficking of functional transporters heterodimers to the plasma membrane. Forms heterodimer with SLC7 family transporters (SLC7A5, SLC7A6, SLC7A7, SLC7A8, SLC7A10 and SLC7A11), a group of amino-acid antiporters. Heterodimers function as amino acids exchangers, the specificity of the substrate depending on the SLC7A subunit. Heterodimers formed by SLC3A2/SLC7A6 or SLC3A2/SLC7A7 mediate the uptake of dibasic amino acids. Heterodimer SLC3A2/SLC7A11 functions as an antiporter by mediating the exchange of extracellular anionic L-cystine and intracellular L-glutamate across the cellular plasma membrane. SLC3A2/SLC7A10 translocates small neutral L- and D-amino acids across the plasma membrane. SLC3A2/SLC75 or SLC3A2/SLC7A8 translocates neutral amino acids with broad specificity, thyroid hormones and L-DOPA. SLC3A2 is essential for plasma membrane localization, stability, and the transport activity of SLC7A5 and SLC7A8. When associated with LAPTM4B, the heterodimer SLC7A5 is recruited to lysosomes to promote leucine uptake into these organelles, and thereby mediates mTORC1 activation. Modulates integrin-related signaling and is essential for integrin-dependent cell spreading, migration and tumor progression. This chain is Amino acid transporter heavy chain SLC3A2, found in Oryctolagus cuniculus (Rabbit).